A 729-amino-acid polypeptide reads, in one-letter code: MQSTSNHLWLLSDILGQGATANVFRGRHKKTGDLYAVKVFNNISFLRPVDVQMREFEVLKKLNHKNIVKLFAIEEETTTRHKVLIMEFCPCGSLYTVLEEPSNAYGLPESEFLIVLRDVVGGMNHLRENGIVHRDIKPGNIMRVIGEDGQSVYKLTDFGAARELEDDEQFVSLYGTEEYLHPDMYERAVLRKDHQKKYGATVDLWSVGVTFYHAATGSLPFRPFEGPRRNKEVMYKIITGKPSGAISGVQKAENGPIDWSGDMPLSCSLSQGLQALLTPVLANILEADQEKCWGFDQFFAETSDVLHRMVIHVFSLQHMTAHKIYIHSYNTAAVFHELVYKQTKIVSSNQELIYEGRRLVLELGRLAQHFPKTTEENPIFVTSREQLNTVGLRYEKISLPKIHPRYDLDGDASMAKAVTGVVCYACRTASTLLLYQELMRKGVRWLVELVKDDYNETVHKKTEVVITLDFCIRNIEKTVKVYEKLMKVNLEAAELGEISDIHTKLLRLSSSQGTIESSLQDISSRLSPGGLLADTWAHQEGTHPRDRNVEKLQVLLNCITEIYYQFKKDKAERRLAYNEEQIHKFDKQKLYYHATKAMSHFSEECVRKYEAFKDKSEEWMRKMLHLRKQLLSLTNQCFDIEEEVSKYQDYTNELQETLPQKMLAASGGVKHAMAPIYPSSNTLVEMTLGMKKLKEEMEGVVKELAENNHILERFGSLTMDGGLRNVDCL.

The Protein kinase domain occupies 9–310 (WLLSDILGQG…ETSDVLHRMV (302 aa)). 15–23 (LGQGATANV) contacts ATP. Lysine 30 participates in a covalent cross-link: Glycyl lysine isopeptide (Lys-Gly) (interchain with G-Cter in ubiquitin). Lysine 38 contacts ATP. Aspartate 135 serves as the catalytic Proton acceptor. Serine 172 is modified (phosphoserine; by autocatalysis and IKKB). Residues 309-385 (MVIHVFSLQH…ENPIFVTSRE (77 aa)) form the Ubiquitin-like domain. A Glycyl lysine isopeptide (Lys-Gly) (interchain with G-Cter in ubiquitin) cross-link involves residue lysine 401. 2 coiled-coil regions span residues 407–657 (DLDG…LQET) and 658–713 (LPQK…ILER). The interval 621–729 (RKMLHLRKQL…DGGLRNVDCL (109 aa)) is interaction with AZI2, TANK and TBKBP1. A Glycyl lysine isopeptide (Lys-Gly) (interchain with G-Cter in ubiquitin) cross-link involves residue lysine 670. Serine 716 carries the post-translational modification Phosphoserine.

It belongs to the protein kinase superfamily. Ser/Thr protein kinase family. I-kappa-B kinase subfamily. In terms of assembly, homodimer. Interacts with DDX3X, TIRAP and TRAF2. Part of a ternary complex consisting of TANK, TRAF2 and TBK1. Interacts with AZI2, TANK and TBKBP1; these interactions are mutually exclusive and mediate TBK1 activation. Interacts with GSK3B; this interaction promotes TBK1 self-association and autophosphorylation. Interacts with SIKE1; SIKE1 is associated with TBK1 under physiological condition and dissociated from TBK1 upon viral infection or TLR3 stimulation. Interacts with IRF3, leading to IRF3 phosphorylation. Interacts with RIGI. Interacts with CYLD. Interacts with OPTN and TRAF3. Interacts with SRC. Interacts with the exocyst complex subunit SEC5/EXOC2; this interaction is sufficient to trigger TBK1 activity. Interacts with STING1, leading to STING1 phosphorylation. Interacts with IFIT3 (via N-terminus). Interacts with MAVS; interaction only takes place in the presence of IFIT3 and leads to MAVS phosphorylation. Interacts (via protein kinase domain) with TTLL12 (via TTL domain); the interaction prevents MAVS binding to TBK1. Interacts with TICAM1; this interaction is enhanced in the presence of WDFY1 and leads to TICAM1 phosphorylation. Interacts with TRIM26. Interacts with TRIM23. Interacts with TTC4 and IKBKE. Interacts with HNRNPA2B1. Interacts with DDX3X. Interacts with TRIM14. Interacts with CEP170; efficient complex formation may be dependent on the presence of CCDC61. Interacts with TRAF3IP3. Interacts with HSP90AA1; the interaction mediates TBK1 association with TOMM70. Interacts with TAX1BP1. Interacts with kinase IKBKB; the complex interacts with STAT1, leading to phosphorylation of STAT1 on 'Thr-748' by IKBKB. Interacts with ICOS; this interaction is critical for the maturation of T follicular regulatory cells. Interacts with RNF144B; this interaction prevents TBK1 phosphorylation and subsequent activation. Interacts with ASB8; this interaction promotes TBK1 proteasomal degradation. Autophosphorylation at Ser-172 activates the kinase, and is an essential step for virus-triggered signaling. Phosphorylated by IKBKB/IKKB at Ser-172. Phosphorylation requires homodimerization and ubiquitination at Lys-30 and Lys-401. Dephosphorylated at Ser-172 by PPM1B and this negatively regulates its role in mediating antiviral response. In terms of processing, 'Lys-63'-linked polyubiquitination by MIB1 after RNA virus infection, or by NRDP1 after LPS stimulation at Lys-30 and Lys-401, participates in kinase activation. 'Lys-48'-linked polyubiquitination at Lys-670 by DTX4 leads to proteasomal degradation. 'Lys-48'-linked polyubiquitination by TRAIP also leads to proteasomal degradation. 'Lys-48'-linked polyubiquitination by TRAF7; leading to proteasomal degradation. 'Lys-63'-linked polyubiquitination by RNF128 at Lys-30 and Lys-401 leads to the activation of antiviral responses. 'Lys-48'-linked polyubiquitination after 'lys-33'-linked deubiquitination by USP38 promotes TBK1 degradation.

Its subcellular location is the cytoplasm. It catalyses the reaction L-seryl-[protein] + ATP = O-phospho-L-seryl-[protein] + ADP + H(+). The enzyme catalyses L-threonyl-[protein] + ATP = O-phospho-L-threonyl-[protein] + ADP + H(+). With respect to regulation, kinase activity is inhibited competitively by amlexanox. Serine/threonine kinase that plays an essential role in regulating inflammatory responses to foreign agents. Following activation of toll-like receptors by viral or bacterial components, associates with TRAF3 and TANK and phosphorylates interferon regulatory factors (IRFs) IRF3 and IRF7 as well as DDX3X. This activity allows subsequent homodimerization and nuclear translocation of the IRFs leading to transcriptional activation of pro-inflammatory and antiviral genes including IFNA and IFNB. In order to establish such an antiviral state, TBK1 form several different complexes whose composition depends on the type of cell and cellular stimuli. Thus, several scaffolding molecules including FADD, TRADD, MAVS, AZI2, TANK or TBKBP1/SINTBAD can be recruited to the TBK1-containing-complexes. Plays a key role in IRF3 activation: acts by first phosphorylating innate adapter proteins MAVS, STING1 and TICAM1 on their pLxIS motif, leading to recruitment of IRF3, thereby licensing IRF3 for phosphorylation by TBK1. Under particular conditions, functions as a NF-kappa-B effector by phosphorylating NF-kappa-B inhibitor alpha/NFKBIA, IKBKB or RELA to translocate NF-Kappa-B to the nucleus. Restricts bacterial proliferation by phosphorylating the autophagy receptor OPTN/Optineurin on 'Ser-177', thus enhancing LC3 binding affinity and antibacterial autophagy. Phosphorylates SMCR8 component of the C9orf72-SMCR8 complex, promoting autophagosome maturation. Phosphorylates ATG8 proteins MAP1LC3C and GABARAPL2, thereby preventing their delipidation and premature removal from nascent autophagosomes. Seems to play a role in energy balance regulation by sustaining a state of chronic, low-grade inflammation in obesity, which leads to a negative impact on insulin sensitivity. Acts both as a positive and negative regulator of the mTORC1 complex, depending on the context: activates mTORC1 in response to growth factors by catalyzing phosphorylation of MTOR, while it limits the mTORC1 complex by promoting phosphorylation of RPTOR. Acts as a positive regulator of the mTORC2 complex by mediating phosphorylation of MTOR, leading to increased phosphorylation and activation of AKT1. Phosphorylates and activates AKT1. Involved in the regulation of TNF-induced RIPK1-mediated cell death, probably acting via CYLD phosphorylation that in turn controls RIPK1 ubiquitination status. Also participates in the differentiation of T follicular regulatory cells together with the receptor ICOS. The protein is Serine/threonine-protein kinase TBK1 of Mus musculus (Mouse).